Here is a 378-residue protein sequence, read N- to C-terminus: Sperm microtubule associated protein 2 (378 aa).

Disordered stretches follow at residues 1–35 (MGEL…SDGS) and 47–79 (WLQS…LPEV). A compositionally biased stretch (polar residues) spans 47–56 (WLQSSQATTE). The span at 61-77 (DPEEEIPPEEMVGEELP) shows a compositional bias: acidic residues. THEG repeat units follow at residues 113–132 (AKCR…PKFN), 179–198 (TITV…PKRF), 217–236 (STLE…PKIR), 253–272 (AAQM…PRAP), 285–304 (PKPY…PKAL), 321–340 (VTKN…PKIR), and 355–374 (ASLV…PKHI). At serine 290 the chain carries Phosphoserine.

As to quaternary structure, interacts with CCT5.

It localises to the nucleus. Functionally, may be involved (but not essential) in spermatogenesis. This Rattus norvegicus (Rat) protein is Sperm microtubule associated protein 2.